The sequence spans 434 residues: 3-phosphoshikimate 1-carboxyvinyltransferase (434 aa).

Residues Lys22, Ser23, and Arg27 each coordinate 3-phosphoshikimate. Lys22 serves as a coordination point for phosphoenolpyruvate. Positions 93 and 121 each coordinate phosphoenolpyruvate. Ser168, Ser169, Gln170, Ser199, Asp320, and Lys347 together coordinate 3-phosphoshikimate. Gln170 serves as a coordination point for phosphoenolpyruvate. The active-site Proton acceptor is the Asp320. Residues Arg351, Arg394, and Lys419 each contribute to the phosphoenolpyruvate site.

Belongs to the EPSP synthase family. As to quaternary structure, monomer.

It is found in the cytoplasm. The enzyme catalyses 3-phosphoshikimate + phosphoenolpyruvate = 5-O-(1-carboxyvinyl)-3-phosphoshikimate + phosphate. The protein operates within metabolic intermediate biosynthesis; chorismate biosynthesis; chorismate from D-erythrose 4-phosphate and phosphoenolpyruvate: step 6/7. In terms of biological role, catalyzes the transfer of the enolpyruvyl moiety of phosphoenolpyruvate (PEP) to the 5-hydroxyl of shikimate-3-phosphate (S3P) to produce enolpyruvyl shikimate-3-phosphate and inorganic phosphate. The polypeptide is 3-phosphoshikimate 1-carboxyvinyltransferase (Burkholderia ambifaria (strain ATCC BAA-244 / DSM 16087 / CCUG 44356 / LMG 19182 / AMMD) (Burkholderia cepacia (strain AMMD))).